Consider the following 68-residue polypeptide: Erythrodihydroneopterin triphosphate synthetase (68 aa).

Serine 66 carries the post-translational modification Phosphoserine.

The polypeptide is Erythrodihydroneopterin triphosphate synthetase (Cavia porcellus (Guinea pig)).